Reading from the N-terminus, the 181-residue chain is MTDRTDADDLDLQRVGARLAARAQIRDIRLLRTQAAVHRAPKPAQGLTYDLEFEPAVDADPATISAFVVRISCHLRIQNQAADNDVKEGDTKDETQDVATADFEFAALFDYHLQEGEDDPTEEELTAYAATTGRFALYPYIREYVYDLTGRLALPPLTLEILSRPMPVSPGAQWPATRGTP.

This sequence belongs to the SecB-like family. In terms of assembly, homotetramer, interacts with antitoxin HigA1.

In terms of biological role, chaperone component of an atypical, type II toxin-antitoxin chaperone (TAC) module, probably required for antitoxin HigA1 to neutralize its cognate toxin HigB1. This is SecB-like chaperone MT2006 (secBL) from Mycobacterium tuberculosis (strain CDC 1551 / Oshkosh).